The sequence spans 457 residues: MLSSQTSTIFTVSRLNQTVRLLLEQEMGQVWISGEISNFTQPASGHWYFTLKDDTAQVRCAMFRNSNRRVTFRPQHGQQVLVRANITLYEPRGDYQIIIESMQPAGEGLLQQKYELLKAKLQAEGLFDQQYKQPLPSPAHCVGVITSKTGAALHDILHVLKRRDPSLPVIIYPTAVQGDDAPGQIVRAIERANARNECDVLIVGRGGGSLEDLWSFNDERVARAIFASRIPVVSAVGHETDVTIADFVADLRAPTPSAAAEIVSRNQQELLRQIQSAQQRLGMAMDYYLANRNRRFTQLFHRLQQQHPQLRLARQQTMLERLRQRMNFALDNQLKRAASRQQRVLQRLNQQNPQPRIYRAQTRIQQLEYRLAENVRARLSATRERFGNAVTHLEAVSPLSTLARGYSVTTATDGKVLKQTRQVKAGDVLTTRLSDGWVESEVKGVTTAKKTRRKKTD.

It belongs to the XseA family. Heterooligomer composed of large and small subunits.

It localises to the cytoplasm. The enzyme catalyses Exonucleolytic cleavage in either 5'- to 3'- or 3'- to 5'-direction to yield nucleoside 5'-phosphates.. In terms of biological role, bidirectionally degrades single-stranded DNA into large acid-insoluble oligonucleotides, which are then degraded further into small acid-soluble oligonucleotides. This is Exodeoxyribonuclease 7 large subunit from Citrobacter koseri (strain ATCC BAA-895 / CDC 4225-83 / SGSC4696).